The primary structure comprises 631 residues: Translation factor GUF1, mitochondrial (631 aa).

The N-terminal 19 residues, 1–19 (MFNRRLLRHVRYAFQQVRS), are a transit peptide targeting the mitochondrion. The 182-residue stretch at 33–214 (ERYRNFSIVA…AIVDRIPPPT (182 aa)) folds into the tr-type G domain. GTP-binding positions include 42 to 49 (AHVDHGKS), 107 to 111 (DTPGH), and 161 to 164 (NKID).

This sequence belongs to the TRAFAC class translation factor GTPase superfamily. Classic translation factor GTPase family. LepA subfamily.

It localises to the mitochondrion inner membrane. It catalyses the reaction GTP + H2O = GDP + phosphate + H(+). In terms of biological role, promotes mitochondrial protein synthesis. May act as a fidelity factor of the translation reaction, by catalyzing a one-codon backward translocation of tRNAs on improperly translocated ribosomes. Binds to mitochondrial ribosomes in a GTP-dependent manner. This chain is Translation factor GUF1, mitochondrial, found in Kluyveromyces lactis (strain ATCC 8585 / CBS 2359 / DSM 70799 / NBRC 1267 / NRRL Y-1140 / WM37) (Yeast).